A 285-amino-acid polypeptide reads, in one-letter code: Retron Ec67 DNA adenine methylase (285 aa).

Tryptophan 7, lysine 11, aspartate 51, and aspartate 179 together coordinate S-adenosyl-L-methionine.

This sequence belongs to the N(4)/N(6)-methyltransferase family.

The catalysed reaction is a 2'-deoxyadenosine in DNA + S-adenosyl-L-methionine = an N(6)-methyl-2'-deoxyadenosine in DNA + S-adenosyl-L-homocysteine + H(+). An alpha subtype methylase that recognizes the double-stranded sequence 5'-GATC-3' and methylates A-2 on both strands. May play a regulatory role in the functions of the retron. The chain is Retron Ec67 DNA adenine methylase from Escherichia coli.